We begin with the raw amino-acid sequence, 125 residues long: Small ribosomal subunit protein uS12m (125 aa).

This sequence belongs to the universal ribosomal protein uS12 family.

It is found in the mitochondrion. In terms of biological role, protein S12 is involved in the translation initiation step. This is Small ribosomal subunit protein uS12m (RPS12) from Helianthus annuus (Common sunflower).